A 485-amino-acid chain; its full sequence is Cyclic GMP-AMP synthase-like receptor (485 aa).

ATP contacts are provided by residues Ser-70 and 82-84 (EYD). Residues Glu-82, Asp-84, and Asp-204 each contribute to the Mg(2+) site. Residues Asp-204 and 247–254 (RLSFYEQE) contribute to the GTP site. Residues Lys-271 and Lys-274 each contribute to the ATP site. Residues Ile-298 and Asp-304 each coordinate Mn(2+).

It belongs to the mab-21 family. Requires Mg(2+) as cofactor. Mn(2+) is required as a cofactor.

It catalyses the reaction GTP + ATP = 2',3'-cGAMP + 2 diphosphate. The catalysed reaction is GTP + ATP = pppGp(2'-5')A + diphosphate. The enzyme catalyses pppGp(2'-5')A = 2',3'-cGAMP + diphosphate. Its function is as follows. Nucleotidyltransferase that catalyzes the formation of cyclic GMP-AMP (2',3'-cGAMP) from ATP and GTP and plays a key role in innate immunity. Directly binds some unknown ligand, activating the nucleotidyltransferase activity, leading to synthesis of 2',3'-cGAMP, a second messenger that binds to and activates Sting, thereby triggering the immune response via activation of the NF-kappa-B transcription factor. The protein is Cyclic GMP-AMP synthase-like receptor of Trichogramma pretiosum (Parasitoid wasp).